Reading from the N-terminus, the 196-residue chain is MEVHNVDLTISAVSDEQYPKTNIPEIALVGRSNVGKSSLTNVLINRRNFAHTSSQPGKTQTLNFYDVEDKVYFVDVPGYGYAKVSKKERERFGKMIEQYLTQREQLRGVIQLVDARHEPTPDDVNMYNWLQYYNIPTLIVGTKIDKVKRSAWNRQLSLIKKTLDVESSTPIILFSATEKKGKDDVWQWIEERMGKN.

An EngB-type G domain is found at 22-195 (NIPEIALVGR…WQWIEERMGK (174 aa)). GTP contacts are provided by residues 30-37 (GRSNVGKS), 57-61 (GKTQT), 75-78 (DVPG), 142-145 (TKID), and 174-176 (FSA). Mg(2+) is bound by residues S37 and T59.

Belongs to the TRAFAC class TrmE-Era-EngA-EngB-Septin-like GTPase superfamily. EngB GTPase family. Requires Mg(2+) as cofactor.

Necessary for normal cell division and for the maintenance of normal septation. This Limosilactobacillus reuteri (strain DSM 20016) (Lactobacillus reuteri) protein is Probable GTP-binding protein EngB.